The sequence spans 851 residues: Transforming growth factor beta receptor type 3 (851 aa).

The signal sequence occupies residues 1 to 20 (MTSHYVIAIFALMSSCLATA). Residues 21-787 (GPEPGALCEL…IFHGLDTLTV (767 aa)) lie on the Extracellular side of the membrane. Cys-52 and Cys-197 are disulfide-bonded. 2 N-linked (GlcNAc...) asparagine glycosylation sites follow: Asn-141 and Asn-492. The region spanning 455–730 (KCDNEKMIVA…PKCVPPDEAC (276 aa)) is the ZP domain. 2 O-linked (Xyl...) (glycosaminoglycan) serine glycosylation sites follow: Ser-534 and Ser-545. N-linked (GlcNAc...) asparagine glycosylation is found at Asn-571, Asn-590, and Asn-697. Intrachain disulfides connect Cys-639-Cys-705, Cys-660-Cys-730, and Cys-710-Cys-723. The interval 737–751 (IIWAMMQNKKTFTKP) is interaction with TGF-beta ligand. The chain crosses the membrane as a helical span at residues 788-809 (MGIAFAAFVIGALLTGALWYIY). Residues 810-851 (SHTGETAGRQQVPTSPPASENSSAAHSIGSTQSTPCSSSSTA) are Cytoplasmic-facing. The tract at residues 816–851 (AGRQQVPTSPPASENSSAAHSIGSTQSTPCSSSSTA) is disordered. Positions 817–834 (GRQQVPTSPPASENSSAA) are enriched in polar residues. Positions 836–851 (SIGSTQSTPCSSSSTA) are enriched in low complexity. Phosphothreonine is present on Thr-840.

As to quaternary structure, forms homodimers and homooligomers. Interacts with DYNLT4. Interacts with integrin ITGA5:ITGB1; this interaction promotes the internalization and trafficking of ITGA5:ITGB1 into endocytic vesicles. Interacts with TGFB1, BMP2, BMP5, BMP7 or GDF5 and inhibin A via the ligand binding domains. Interacts with ALK3/BMPR1A; this interaction results in the cell surface retention of BMPR1A. Interacts with ALK6/BMPR1B; this interaction enhances BMPR1B-mediated stimulation of the BMP signaling pathway. Interacts with the scaffolding protein beta-arrestin2/ARRB2; this interaction mediates internalization of TGFBR3 and thus regulates migration, actin cytoskeleton and activation of CDC42. In terms of assembly, (Microbial infection) Interacts with human cytomegalovirus trimer complex composed of gH, gL, and gO; these interactions may promote HCMV cell entry in specific cell types. Extensively modified by glycosaminoglycan groups (GAG). In terms of processing, phosphorylated in the cytoplasmic domain by the type II receptor TGFBR2 at THR-840 to mediate recruitment of ARRB2 and subsequent internalization of TGFBR2 and TGFBR3.

It is found in the cell membrane. Its subcellular location is the secreted. It localises to the extracellular space. The protein localises to the extracellular matrix. Functionally, cell surface receptor that regulates diverse cellular processes including cell proliferation, differentiation, migration, and apoptosis. Initiates BMP, inhibin, and TGF-beta signaling pathways by interacting with different ligands including TGFB1, BMP2, BMP5, BMP7 or GDF5. Alternatively, acts as a cell surface coreceptor for BMP ligands, serving to enhance ligand binding by differentially regulating BMPR1A/ALK3 and BMPR1B/ALK6 receptor trafficking. Promotes epithelial cell adhesion, focal adhesion formation and integrin signaling during epithelial cell spreading on fibronectin. By interacting with the scaffolding protein beta-arrestin2/ARRB2, regulates migration or actin cytoskeleton and promotes the activation of CDC42 as well as the inhibition of NF-kappa-B. In gonadotrope cells, acts as an inhibin A coreceptor and regulates follicle-stimulating hormone (FSH) levels and female fertility. Plays a role in the inhibition of directed and random cell migration in epithelial cells by altering the actin cytoskeletal organization. Participates in epithelial-mesenchymal transformation (EMT) upon binding to BMP2 or TGFB2, by activating the PAR6/SMURF1/RHOA pathway. In terms of biological role, (Microbial infection) May act as a receptor for human cytomegalovirus in different cell types by interacting with HCMV trimer composed of GO, GH and GL. The polypeptide is Transforming growth factor beta receptor type 3 (Homo sapiens (Human)).